The sequence spans 297 residues: Putative S-adenosyl-L-methionine-dependent methyltransferase Mmcs_1044 (297 aa).

S-adenosyl-L-methionine is bound by residues aspartate 124 and 153 to 154; that span reads DL.

The protein belongs to the UPF0677 family.

Functionally, exhibits S-adenosyl-L-methionine-dependent methyltransferase activity. This chain is Putative S-adenosyl-L-methionine-dependent methyltransferase Mmcs_1044, found in Mycobacterium sp. (strain MCS).